The following is a 206-amino-acid chain: MLKTIRKHGITLALFAAGSTGLTAVINQMTKSTIHEQALQQQHALFDQVLPPDRYNNNLQESCYLVDAPALGKGTHRVFIARKDDKPVAAIIEATAPDGYSGAIQLIVGADFNGTILGTRVTEHHETPGLGDKIERRLSDWITHFSGKTISGENDTHWAVKKDGGDFDQFTGATITPRAVVNAVKRAGLYAESLPAQLPHLTACGE.

Residues 9 to 29 traverse the membrane as a helical segment; that stretch reads GITLALFAAGSTGLTAVINQM. The residue at position 174 (Thr174) is an FMN phosphoryl threonine.

This sequence belongs to the RnfG family. The complex is composed of six subunits: RsxA, RsxB, RsxC, RsxD, RsxE and RsxG. FMN serves as cofactor.

It is found in the cell inner membrane. Functionally, part of a membrane-bound complex that couples electron transfer with translocation of ions across the membrane. Required to maintain the reduced state of SoxR. This chain is Ion-translocating oxidoreductase complex subunit G, found in Salmonella typhi.